Here is a 99-residue protein sequence, read N- to C-terminus: Malonate decarboxylase acyl carrier protein (99 aa).

S25 carries the post-translational modification O-(phosphoribosyl dephospho-coenzyme A)serine.

Belongs to the MdcC family. In terms of processing, covalently binds the prosthetic group of malonate decarboxylase.

It localises to the cytoplasm. Its function is as follows. Subunit of malonate decarboxylase, it is an acyl carrier protein to which acetyl and malonyl thioester residues are bound via a 2'-(5''-phosphoribosyl)-3'-dephospho-CoA prosthetic group and turn over during the catalytic mechanism. The sequence is that of Malonate decarboxylase acyl carrier protein from Pseudomonas fluorescens (strain SBW25).